The chain runs to 593 residues: Mono(ADP-ribosyl)transferase SpvB (593 aa).

Residues 361-384 (PVNNMMPPPPPPPPPMMGGNSSRP) are disordered. Pro residues predominate over residues 366–376 (MPPPPPPPPPM). The region spanning 375-578 (PMMGGNSSRP…LRLSDDATAD (204 aa)) is the TR mART core domain. Residues R473, S503, and E540 contribute to the active site.

The protein belongs to the SpvB family.

It localises to the secreted. The enzyme catalyses L-arginyl-[protein] + NAD(+) = N(omega)-(ADP-D-ribosyl)-L-arginyl-[protein] + nicotinamide + H(+). Its function is as follows. Mono-ADP-ribosylates muscle and non-muscle actin. ADP-ribosylates Chinese hamster ovary and HeLa cell actin as well as rabbit muscle, porcine heart actin and non-muscle beta- and gamma-actin. ADP-ribosylation of actin prevents the polymerization of G actin to F actin, causing actin filament depolymerization, destruction of the cytoskeleton and cytotoxicity; this requires only the C-terminal 120 residues. Does not possess NAD(+)-glycohydrolase activity, unlike most mART enzymes. This is Mono(ADP-ribosyl)transferase SpvB (spvB) from Salmonella dublin.